The sequence spans 167 residues: Endoribonuclease YbeY (167 aa).

Zn(2+) is bound by residues histidine 132, histidine 136, and histidine 142.

The protein belongs to the endoribonuclease YbeY family. Zn(2+) serves as cofactor.

The protein resides in the cytoplasm. Single strand-specific metallo-endoribonuclease involved in late-stage 70S ribosome quality control and in maturation of the 3' terminus of the 16S rRNA. The chain is Endoribonuclease YbeY from Clostridium tetani (strain Massachusetts / E88).